Reading from the N-terminus, the 461-residue chain is Asparagine--tRNA ligase (461 aa).

This sequence belongs to the class-II aminoacyl-tRNA synthetase family. In terms of assembly, homodimer.

The protein localises to the cytoplasm. The catalysed reaction is tRNA(Asn) + L-asparagine + ATP = L-asparaginyl-tRNA(Asn) + AMP + diphosphate + H(+). The sequence is that of Asparagine--tRNA ligase from Geobacter metallireducens (strain ATCC 53774 / DSM 7210 / GS-15).